The sequence spans 264 residues: Thymidylate synthase (264 aa).

Arg21 contacts dUMP. Residue His51 participates in (6R)-5,10-methylene-5,6,7,8-tetrahydrofolate binding. 126–127 (RR) contributes to the dUMP binding site. Cys146 acts as the Nucleophile in catalysis. DUMP contacts are provided by residues 166–169 (RSAD), Asn177, and 207–209 (HLY). Residue Asp169 coordinates (6R)-5,10-methylene-5,6,7,8-tetrahydrofolate. Ala263 provides a ligand contact to (6R)-5,10-methylene-5,6,7,8-tetrahydrofolate.

The protein belongs to the thymidylate synthase family. Bacterial-type ThyA subfamily. As to quaternary structure, homodimer.

The protein resides in the cytoplasm. It carries out the reaction dUMP + (6R)-5,10-methylene-5,6,7,8-tetrahydrofolate = 7,8-dihydrofolate + dTMP. It functions in the pathway pyrimidine metabolism; dTTP biosynthesis. In terms of biological role, catalyzes the reductive methylation of 2'-deoxyuridine-5'-monophosphate (dUMP) to 2'-deoxythymidine-5'-monophosphate (dTMP) while utilizing 5,10-methylenetetrahydrofolate (mTHF) as the methyl donor and reductant in the reaction, yielding dihydrofolate (DHF) as a by-product. This enzymatic reaction provides an intracellular de novo source of dTMP, an essential precursor for DNA biosynthesis. The protein is Thymidylate synthase of Azoarcus sp. (strain BH72).